A 770-amino-acid chain; its full sequence is Coiled-coil alpha-helical rod protein 1 (770 aa).

3 coiled-coil regions span residues 56–289 (STVT…DLQA), 334–420 (LRNW…RQEQ), and 476–669 (GLMA…RKEE). 4 disordered regions span residues 573-592 (LEAA…SLRQ), 641-672 (LRQI…EGQR), 700-721 (NKKC…AASC), and 744-770 (SRDE…PLLS). A compositionally biased stretch (basic and acidic residues) spans 648 to 672 (ATQEKERNQELRRLQDEARKEEGQR). Over residues 701 to 721 (KKCSPRSVESSSSESPAAASC) the composition is skewed to low complexity.

The protein resides in the cytoplasm. Its subcellular location is the nucleus. Functionally, may be a regulator of keratinocyte proliferation or differentiation. The sequence is that of Coiled-coil alpha-helical rod protein 1 (Cchcr1) from Mus musculus (Mouse).